A 236-amino-acid polypeptide reads, in one-letter code: Glycosylphosphatidylinositol anchor biosynthesis protein 11 (236 aa).

The next 2 membrane-spanning stretches (helical) occupy residues 40-60 and 65-85; these read TLTI…FGLT and GVML…GYLI. N99 is a glycosylation site (N-linked (GlcNAc...) asparagine). The next 4 helical transmembrane spans lie at 107–127, 139–159, 184–204, and 215–235; these read LLAG…VALI, ETYL…LVLY, ILLS…PIPL, and ITLL…CFLF.

This sequence belongs to the PIGF family.

The protein resides in the endoplasmic reticulum membrane. The protein operates within glycolipid biosynthesis; glycosylphosphatidylinositol-anchor biosynthesis. Its function is as follows. Acts in the GPI biosynthetic pathway between GlcNAc-PI synthesis and GPI transfer to protein. In Debaryomyces hansenii (strain ATCC 36239 / CBS 767 / BCRC 21394 / JCM 1990 / NBRC 0083 / IGC 2968) (Yeast), this protein is Glycosylphosphatidylinositol anchor biosynthesis protein 11 (GPI11).